A 607-amino-acid polypeptide reads, in one-letter code: uncharacterized protein (607 aa).

2 disordered regions span residues 28–114 (GAER…KLRR) and 142–188 (DQER…NNSS). The span at 35-50 (SSHGSINSRSASPNKA) shows a compositional bias: polar residues. Basic and acidic residues-rich tracts occupy residues 90–102 (VNGE…DHDT) and 161–174 (KENK…KDLS). Residues 177 to 188 (SSSSMKKANNSS) are compositionally biased toward low complexity. 2 PHD-type zinc fingers span residues 263–312 (NDYC…CKHH) and 406–459 (PILC…HSDH).

This is an uncharacterized protein from Schizosaccharomyces pombe (strain 972 / ATCC 24843) (Fission yeast).